The primary structure comprises 54 residues: MSPQTETKASVGFKAGVKDYKLTYYTPDYETKDTDILAAFRVTPQPGVPPEEAG.

A propeptide spanning residues 1 to 2 (MS) is cleaved from the precursor. Pro-3 carries the N-acetylproline modification. The residue at position 14 (Lys-14) is an N6,N6,N6-trimethyllysine.

Belongs to the RuBisCO large chain family. Type I subfamily. In terms of assembly, heterohexadecamer of 8 large chains and 8 small chains.

The protein resides in the plastid. It localises to the chloroplast. The enzyme catalyses 2 (2R)-3-phosphoglycerate + 2 H(+) = D-ribulose 1,5-bisphosphate + CO2 + H2O. The catalysed reaction is D-ribulose 1,5-bisphosphate + O2 = 2-phosphoglycolate + (2R)-3-phosphoglycerate + 2 H(+). Functionally, ruBisCO catalyzes two reactions: the carboxylation of D-ribulose 1,5-bisphosphate, the primary event in carbon dioxide fixation, as well as the oxidative fragmentation of the pentose substrate in the photorespiration process. Both reactions occur simultaneously and in competition at the same active site. The protein is Ribulose bisphosphate carboxylase large chain (rbcL) of Icacina mannii.